The primary structure comprises 120 residues: MANPHQIYRHDAAWDRQVFRSLATSLILHGHIKTTLDRAKRLRSVVEKIITKAKKNDLAARRQILSFLYAQKTKAGIKVMPYLFNKVAPRYQERNGGYTRIVRIPSRLGDNSKMAIIELV.

The protein belongs to the bacterial ribosomal protein bL17 family. As to quaternary structure, part of the 50S ribosomal subunit. Contacts protein L32.

The chain is Large ribosomal subunit protein bL17 from Mesomycoplasma hyopneumoniae (strain 232) (Mycoplasma hyopneumoniae).